The following is a 366-amino-acid chain: Mitochondrial carrier protein MTM1 (366 aa).

Solcar repeat units lie at residues 14 to 149, 156 to 250, and 266 to 359; these read ERML…IRDV, YPTL…CKER, and VHFI…SKKV. A run of 6 helical transmembrane segments spans residues 17 to 36, 126 to 146, 162 to 182, 229 to 249, 268 to 286, and 331 to 352; these read LSAGAGSVLTSLILTPMDVV, SLTLLMAIPANMVYFSGYEYI, LFCGAIARVFAATSIAPLELV, TLWRDVPFSAIYWSSYELCKE, FINSFASGCISGMIAAICT, and LYTGLAARVIKIRPSCAIMISS.

Belongs to the mitochondrial carrier (TC 2.A.29) family.

The protein resides in the mitochondrion inner membrane. In terms of biological role, involved in the mitochondrial activation of SOD2 by specifically facilitating insertion of the essential manganese cofactor. Has the ability to activate iron regulon in an iron-dependent manner. Responds to calorie restriction (CR) strength. The sequence is that of Mitochondrial carrier protein MTM1 (MTM1) from Saccharomyces cerevisiae (strain ATCC 204508 / S288c) (Baker's yeast).